The following is a 274-amino-acid chain: NH(3)-dependent NAD(+) synthetase (274 aa).

46–53 is a binding site for ATP; that stretch reads GISGGQDS. A Mg(2+)-binding site is contributed by aspartate 52. Arginine 140 lines the deamido-NAD(+) pocket. An ATP-binding site is contributed by threonine 160. Glutamate 165 lines the Mg(2+) pocket. 2 residues coordinate deamido-NAD(+): lysine 173 and aspartate 180. ATP contacts are provided by lysine 189 and threonine 211. 260–261 is a binding site for deamido-NAD(+); sequence HK.

The protein belongs to the NAD synthetase family. In terms of assembly, homodimer.

The catalysed reaction is deamido-NAD(+) + NH4(+) + ATP = AMP + diphosphate + NAD(+) + H(+). It functions in the pathway cofactor biosynthesis; NAD(+) biosynthesis; NAD(+) from deamido-NAD(+) (ammonia route): step 1/1. Functionally, catalyzes the ATP-dependent amidation of deamido-NAD to form NAD. Uses ammonia as a nitrogen source. This chain is NH(3)-dependent NAD(+) synthetase, found in Streptococcus pyogenes serotype M1.